The chain runs to 262 residues: Ribosomal RNA small subunit methyltransferase A (262 aa).

Residues His-19, Leu-21, Gly-44, Glu-65, Asp-90, and Asn-109 each coordinate S-adenosyl-L-methionine. The interval 218-246 is disordered; it reads LPNNLPGPLRERAEEALAGLGHGPDARAE.

This sequence belongs to the class I-like SAM-binding methyltransferase superfamily. rRNA adenine N(6)-methyltransferase family. RsmA subfamily.

The protein resides in the cytoplasm. It carries out the reaction adenosine(1518)/adenosine(1519) in 16S rRNA + 4 S-adenosyl-L-methionine = N(6)-dimethyladenosine(1518)/N(6)-dimethyladenosine(1519) in 16S rRNA + 4 S-adenosyl-L-homocysteine + 4 H(+). In terms of biological role, specifically dimethylates two adjacent adenosines (A1518 and A1519) in the loop of a conserved hairpin near the 3'-end of 16S rRNA in the 30S particle. May play a critical role in biogenesis of 30S subunits. This Rubrobacter xylanophilus (strain DSM 9941 / JCM 11954 / NBRC 16129 / PRD-1) protein is Ribosomal RNA small subunit methyltransferase A.